The sequence spans 1097 residues: MVNNNKRKEIENQENDNDDDNDGLLTYKKFKDVDYDSIRSKELQTIAKSLGLPNNGKKQEVYKRIEGYFLSKKVKNDLTNSTTNQPPQLQQKQPQQKQYVLLIKDVDQLEIYFWKAFRNMIIFKNIFSNFKSKQFGYHDLIGINENFLKSYSNSLEIIKDNIKGNINHQIIRSVNDIVNIIKTLKKKDNETISFYTTLFSTFSSSSSTTTTMQSTKSLIFQFDENIDLWIQRMILNENLVALDQFIKFFKINSDVLKKSIEMHINPSFFNVFSYNNLKIYNYLKSINAIPTSHIKQRFSNIDLSESLSFDYKFKRLIKSYKLLVDPTKFKEIREIHQQQQQQQQQQQQQQQQQQQEQQKQQEQKQQQQEQEQQQQQQQQQQQQQQQQQEQQQQQEQQQQEQQQEQEQQQQQQQEEQQQEQQQQQQQQQQQQEQQEQEQQQQQQQQQQQQQQQQQQQQQQQQQQQQQQQQQQQQQQQQQQQQQQQQQQQQQQQQQQREGRQLQILDYIEKLDQLILELNEIQFSHFTDDQLNSTIKNLLNQTKTTTTTPILITNNNNCSDLKDIIKKYYKSIYLFLKIIEEGKHDRNLMRPFHYYLYFKKKMNVSQLYEIFCGFFIKKYDDCLIFFKSILIDQQLERNQRLELVSKILDIENGVSFQNIGSNFNFTSFNSFCRVVFSTNDTELIDHLIKTIKKLQLAQNSKTQFPSISYIISINFQYINKNEIVDFFFENYRNETTLFDDQNQNWNNNHVNIIDHIEKIMESIGKKLQLYFVKYSNWFTNGNKNNEKKYNVNILLDQLKRAISKPLLYSFFFDSGYYCNTTLLNIFGWSLENGNEVVINFFLPNEIFKQPFRFSDIIYGAPSPNKIPNLIKLIFNNISKESIEPKLYQVKGNFNIPHLYYGRDDFIPLTSTISTTNSEEVGQFIIGETKSFDFIISPRMLFICLYYLDRFEDIFYLFDKIPEIFSSTYFPNFTKESYLYNICSSYYLELLINYFIENLNDNTINHLYNCLCVASGKGFTQIFKNILSSNKNSQSLLKVRTKTNQSSLFQLNFLCGMVLKSIDSSNFQLSNLLIDSIDFPPKNKRVLNQKYLVHLIINK.

The segment covering 1–11 (MVNNNKRKEIE) has biased composition (basic and acidic residues). A disordered region spans residues 1–24 (MVNNNKRKEIENQENDNDDDNDGL). Over residues 12–22 (NQENDNDDDND) the composition is skewed to acidic residues. The region spanning 35–69 (YDSIRSKELQTIAKSLGLPNNGKKQEVYKRIEGYF) is the SAP domain. A coiled-coil region spans residues 329–521 (FKEIREIHQQ…QLILELNEIQ (193 aa)).

Belongs to the UPF0746 family.

The protein is UPF0746 protein DDB_G0281095 of Dictyostelium discoideum (Social amoeba).